The sequence spans 418 residues: Cell division protein FtsA (418 aa).

It belongs to the FtsA/MreB family. As to quaternary structure, self-interacts. Interacts with FtsZ.

The protein localises to the cell inner membrane. Functionally, cell division protein that is involved in the assembly of the Z ring. May serve as a membrane anchor for the Z ring. The polypeptide is Cell division protein FtsA (Buchnera aphidicola subsp. Acyrthosiphon pisum (strain APS) (Acyrthosiphon pisum symbiotic bacterium)).